The primary structure comprises 250 residues: 4-hydroxy-tetrahydrodipicolinate reductase (250 aa).

NAD(+) is bound by residues 10-15 (GAKGRI), 78-80 (GTT), and 105-108 (APNF). The Proton donor/acceptor role is filled by His-135. His-136 contributes to the (S)-2,3,4,5-tetrahydrodipicolinate binding site. The active-site Proton donor is the Lys-139. 145 to 146 (GT) is a binding site for (S)-2,3,4,5-tetrahydrodipicolinate.

This sequence belongs to the DapB family.

The protein resides in the cytoplasm. The catalysed reaction is (S)-2,3,4,5-tetrahydrodipicolinate + NAD(+) + H2O = (2S,4S)-4-hydroxy-2,3,4,5-tetrahydrodipicolinate + NADH + H(+). The enzyme catalyses (S)-2,3,4,5-tetrahydrodipicolinate + NADP(+) + H2O = (2S,4S)-4-hydroxy-2,3,4,5-tetrahydrodipicolinate + NADPH + H(+). The protein operates within amino-acid biosynthesis; L-lysine biosynthesis via DAP pathway; (S)-tetrahydrodipicolinate from L-aspartate: step 4/4. Functionally, catalyzes the conversion of 4-hydroxy-tetrahydrodipicolinate (HTPA) to tetrahydrodipicolinate. In Streptomyces coelicolor (strain ATCC BAA-471 / A3(2) / M145), this protein is 4-hydroxy-tetrahydrodipicolinate reductase.